Here is a 25-residue protein sequence, read N- to C-terminus: Secapin-1 (25 aa).

Cys-9 and Cys-20 are joined by a disulfide.

As to expression, expressed by the venom gland.

Its subcellular location is the secreted. Its function is as follows. Serine protease inhibitor which exhibits antifibrinolytic, antielastolytic and antimicrobial activities. Displays antimicrobial activity against bacteria and fungi. Likely functions in the innate immune response to microbial infection and possibly in the venom, as an antifibrinolytic agent. This is Secapin-1 from Apis mellifera (Honeybee).